Consider the following 204-residue polypeptide: Pectinesterase inhibitor 9 (204 aa).

Positions 1–23 (MELKNTIFLVILLSITILQSSSA) are cleaved as a signal peptide. Residue Asn26 is glycosylated (N-linked (GlcNAc...) asparagine). Disulfide bonds link Cys38–Cys47 and Cys106–Cys157.

This sequence belongs to the PMEI family. In terms of assembly, binds reversibly to PME3 to inhibit its activity; the stability of the PME3-PMEI9 complex and the inhibition of the pectin methylesterase (PME) activity is pH-dependent, based on protonation status of amino-acids at the complex interface. Highly expressed in roots and etiolated hypocotyls. Expressed in seedlings, leaves, stems, siliques, floral buds and mature seeds.

It is found in the secreted. It localises to the extracellular space. The protein localises to the apoplast. Its function is as follows. Pectin methylesterase (PME) inhibitor that probably targets root-expressed PME and PME3 in a moderate pH-dependent manner, mainly in slightly acidic conditions (pH 6.3 and 5.0) and to some extent at pH 7.5; this processus relies on changes in the protonation of amino acids involved in intermolecular and intramolecular interactions. Regulates de-methylesterification of pectins in roots and affects root growth. This chain is Pectinesterase inhibitor 9, found in Arabidopsis thaliana (Mouse-ear cress).